Consider the following 1018-residue polypeptide: Serine/threonine-protein kinase 31 (1018 aa).

The 60-residue stretch at 78-137 folds into the Tudor domain; it reads NLDPKKIYGGLFSEDKCWYRCKVLKTISDDKCLVRYIDYGNTEILNRSDIVEIPPELQFS. Positions 298–358 form a coiled coil; the sequence is AKIKQDQKLI…TKHLESTLKT (61 aa). A Protein kinase domain is found at 711-1018; the sequence is IGLLKYMNSG…EKTRNGEANP (308 aa). Residues 717-725 and Lys-738 contribute to the ATP site; that span reads MNSGGLLTM. The disordered stretch occupies residues 988–1018; it reads IECTQHSREDESKMESLDRYSEKTRNGEANP.

It belongs to the protein kinase superfamily. Ser/Thr protein kinase family. Testis specific. Expressed only in male germ cells.

It carries out the reaction L-seryl-[protein] + ATP = O-phospho-L-seryl-[protein] + ADP + H(+). It catalyses the reaction L-threonyl-[protein] + ATP = O-phospho-L-threonyl-[protein] + ADP + H(+). The polypeptide is Serine/threonine-protein kinase 31 (Stk31) (Mus musculus (Mouse)).